The sequence spans 70 residues: DNA-directed RNA polymerases I, II, and III subunit RPABC4 (70 aa).

Positions 31, 34, 48, and 51 each coordinate Zn(2+). The segment at 31–51 (CAECSSKLSLSRTDAVRCKDC) adopts a C4-type zinc-finger fold.

Belongs to the archaeal Rpo12/eukaryotic RPC10 RNA polymerase subunit family. As to quaternary structure, component of the RNA polymerase I (Pol I), RNA polymerase II (Pol II) and RNA polymerase III (Pol III) complexes. Component of the RNA polymerase I (Pol I) complex consisting of 14 subunits: RPA135, RPA190, RPC40, RPA14, RPB5, RPO26, RPA43, RPB8, RPA12, RPB10, RPC19, RPC10, RPA49 and RPA34. The complex is composed of a horseshoe-shaped core containing ten subunits (RPA135, RPA190, RPB5, RPO26, RPB8, RPB10, RPC10, RPA12, RPC19 and RPC40) where RPA135 and RPA190 form the DNA-binding cleft. Outside of the core, RPA14 and RPA43 form the stalk that mediates interactions with transcription initiation factors and newly synthesized RNA. Component of the RNA polymerase II (Pol II) complex consisting of 12 subunits: RPO21, RPB2, RPB3, RPB4, RPB5, RPO26, RPB7, RPB8, RPB9, RPB10 and RPC10. Component of the RNA polymerase III (Pol III) complex consisting of 17 subunits. Interacts, via its C-terminus, with TFIIIC subunit TFC4. Post-translationally, the N-terminus is blocked.

It localises to the nucleus. Its subcellular location is the nucleolus. The protein resides in the peroxisome. DNA-dependent RNA polymerases catalyze the transcription of DNA into RNA using the four ribonucleoside triphosphates as substrates. Common component of RNA polymerases I, II and III which synthesize ribosomal RNA precursors, mRNA precursors and many functional non-coding RNAs, and a small RNAs, such as 5S rRNA and tRNAs, respectively. RNA polymerases are composed of mobile elements that move relative to each other. In Pol II, the core element with the central large cleft comprises RPB3, RBP10, RPB11, RPB12 and regions of RPB1 and RPB2 forming the active center. This chain is DNA-directed RNA polymerases I, II, and III subunit RPABC4 (RPC10), found in Saccharomyces cerevisiae (strain ATCC 204508 / S288c) (Baker's yeast).